The primary structure comprises 236 residues: MTIRTLTPIEARVLGTLMEKARTVPDSYPLSLNALVSGCNQKTSRDPLMEVNDDEARAAIDSLKAQSLVFEGSSSRVPRFEHNFQRAAGVNEPQAMVMGLLMLRGPQTAAELRTNGERWYRFADSAAVEAVLLELQQRGEDGGQATVQKLPRAAGAREQRWVHLLCGEPDIQALMASAPTTAEAEGLLARVTALENTLARLKADNAQLRSHVLNISEQLGIALPETLDDAHDHSPN.

The protein belongs to the UPF0502 family.

The protein is UPF0502 protein Bpro_3844 of Polaromonas sp. (strain JS666 / ATCC BAA-500).